A 381-amino-acid chain; its full sequence is tRNA pseudouridine synthase D (381 aa).

Catalysis depends on aspartate 81, which acts as the Nucleophile. Residues glycine 160 to valine 335 form the TRUD domain.

It belongs to the pseudouridine synthase TruD family.

It carries out the reaction uridine(13) in tRNA = pseudouridine(13) in tRNA. Responsible for synthesis of pseudouridine from uracil-13 in transfer RNAs. This chain is tRNA pseudouridine synthase D, found in Helicobacter pylori (strain P12).